Consider the following 1159-residue polypeptide: ATP-dependent helicase/deoxyribonuclease subunit B (1159 aa).

The UvrD-like helicase ATP-binding domain occupies 1–275 (MEFNTYIGRA…TYFNTFYRYN (275 aa)). An ATP-binding site is contributed by 8 to 15 (GRAGTGKS). Positions 269-583 (NTFYRYNNDD…SIGTMDLAKV (315 aa)) constitute a UvrD-like helicase C-terminal domain. [4Fe-4S] cluster contacts are provided by Cys784, Cys1112, Cys1115, and Cys1121.

The protein belongs to the helicase family. AddB/RexB type 1 subfamily. Heterodimer of AddA and AddB. It depends on Mg(2+) as a cofactor. The cofactor is [4Fe-4S] cluster.

Its function is as follows. The heterodimer acts as both an ATP-dependent DNA helicase and an ATP-dependent, dual-direction single-stranded exonuclease. Recognizes the chi site generating a DNA molecule suitable for the initiation of homologous recombination. The AddB subunit has 5' -&gt; 3' nuclease activity but not helicase activity. The sequence is that of ATP-dependent helicase/deoxyribonuclease subunit B from Staphylococcus epidermidis (strain ATCC 35984 / DSM 28319 / BCRC 17069 / CCUG 31568 / BM 3577 / RP62A).